Consider the following 940-residue polypeptide: Valine--tRNA ligase (940 aa).

Positions 47 to 57 match the 'HIGH' region motif; the sequence is PNVTGILHMGH. Positions 564–568 match the 'KMSKS' region motif; it reads KLSKS. Position 567 (Lys-567) interacts with ATP. A coiled-coil region spans residues 872 to 938; the sequence is PIEQITKEKN…LQSILDKLAS (67 aa).

The protein belongs to the class-I aminoacyl-tRNA synthetase family. ValS type 1 subfamily. Monomer.

It localises to the cytoplasm. It catalyses the reaction tRNA(Val) + L-valine + ATP = L-valyl-tRNA(Val) + AMP + diphosphate. Catalyzes the attachment of valine to tRNA(Val). As ValRS can inadvertently accommodate and process structurally similar amino acids such as threonine, to avoid such errors, it has a 'posttransfer' editing activity that hydrolyzes mischarged Thr-tRNA(Val) in a tRNA-dependent manner. This Chlamydia felis (strain Fe/C-56) (Chlamydophila felis) protein is Valine--tRNA ligase.